The chain runs to 454 residues: Protein odr-4 homolog (454 aa).

2 consecutive transmembrane segments (helical) span residues 82 to 102 and 432 to 452; these read MLPGGLLVLGVFIITTLELAN and IGVIAAFTVAVLAAGISFHYF.

Belongs to the ODR-4 family.

It localises to the membrane. May play a role in the trafficking of a subset of G-protein coupled receptors. This chain is Protein odr-4 homolog (ODR4), found in Pongo abelii (Sumatran orangutan).